The sequence spans 406 residues: Enoyl-[acyl-carrier-protein] reductase [NADH] (406 aa).

Residues 48–53 (GASTGF), 74–75 (FE), 111–112 (DA), and 140–141 (IA) each bind NAD(+). Tyr226 is a binding site for substrate. Residue Tyr236 is the Proton donor of the active site. NAD(+) is bound by residues Lys245 and 275 to 277 (LVT).

Belongs to the TER reductase family. In terms of assembly, monomer.

The enzyme catalyses a 2,3-saturated acyl-[ACP] + NAD(+) = a (2E)-enoyl-[ACP] + NADH + H(+). It participates in lipid metabolism; fatty acid biosynthesis. Involved in the final reduction of the elongation cycle of fatty acid synthesis (FAS II). Catalyzes the reduction of a carbon-carbon double bond in an enoyl moiety that is covalently linked to an acyl carrier protein (ACP). The polypeptide is Enoyl-[acyl-carrier-protein] reductase [NADH] (Coxiella burnetii (strain Dugway 5J108-111)).